Here is a 562-residue protein sequence, read N- to C-terminus: Acetolactate synthase isozyme 1 large subunit (562 aa).

Glu-60 is a binding site for thiamine diphosphate. FAD-binding positions include Arg-162, 264-285 (HGVRSTNYILQEADLLIVLGAR), and 307-326 (DIDRAELGKIKQPHVAIQAD). The thiamine pyrophosphate binding stretch occupies residues 393–473 (QHQMWTAQAY…VKIILMNNEA (81 aa)). Mg(2+) is bound by residues Asp-444 and Asn-471.

Belongs to the TPP enzyme family. In terms of assembly, dimer of large and small chains. Requires Mg(2+) as cofactor. Thiamine diphosphate serves as cofactor.

It carries out the reaction 2 pyruvate + H(+) = (2S)-2-acetolactate + CO2. It participates in amino-acid biosynthesis; L-isoleucine biosynthesis; L-isoleucine from 2-oxobutanoate: step 1/4. Its pathway is amino-acid biosynthesis; L-valine biosynthesis; L-valine from pyruvate: step 1/4. The protein is Acetolactate synthase isozyme 1 large subunit (ilvB) of Escherichia coli (strain K12).